The chain runs to 301 residues: Protoheme IX farnesyltransferase 2 (301 aa).

Transmembrane regions (helical) follow at residues valine 29–valine 49, valine 51–leucine 71, alanine 101–asparagine 121, leucine 123–leucine 143, asparagine 150–threonine 170, alanine 177–isoleucine 197, cysteine 223–methionine 243, cysteine 244–tryptophan 264, and phenylalanine 281–serine 301.

The protein belongs to the UbiA prenyltransferase family. Protoheme IX farnesyltransferase subfamily.

The protein resides in the cell inner membrane. It catalyses the reaction heme b + (2E,6E)-farnesyl diphosphate + H2O = Fe(II)-heme o + diphosphate. Its pathway is porphyrin-containing compound metabolism; heme O biosynthesis; heme O from protoheme: step 1/1. Functionally, converts heme B (protoheme IX) to heme O by substitution of the vinyl group on carbon 2 of heme B porphyrin ring with a hydroxyethyl farnesyl side group. This Shewanella sp. (strain W3-18-1) protein is Protoheme IX farnesyltransferase 2.